A 261-amino-acid chain; its full sequence is Ribonuclease PH (261 aa).

Residues Arg87 and 125–127 (GTR) contribute to the phosphate site.

It belongs to the RNase PH family. In terms of assembly, homohexameric ring arranged as a trimer of dimers.

It catalyses the reaction tRNA(n+1) + phosphate = tRNA(n) + a ribonucleoside 5'-diphosphate. In terms of biological role, phosphorolytic 3'-5' exoribonuclease that plays an important role in tRNA 3'-end maturation. Removes nucleotide residues following the 3'-CCA terminus of tRNAs; can also add nucleotides to the ends of RNA molecules by using nucleoside diphosphates as substrates, but this may not be physiologically important. Probably plays a role in initiation of 16S rRNA degradation (leading to ribosome degradation) during starvation. The polypeptide is Ribonuclease PH (Desulforudis audaxviator (strain MP104C)).